Consider the following 540-residue polypeptide: Acrosin-binding protein (540 aa).

A signal peptide spans M1–A24. Positions E25–F104 are pro-ACR binding. Residues E25 to R272 constitute a propeptide, removed in mature form. Positions S181 to F266 are disordered. Basic and acidic residues predominate over residues L195–E213. A compositionally biased stretch (acidic residues) spans A214–L241. Positions Q256–F266 are enriched in polar residues. Residues L316–R424 are pro-ACR binding.

In terms of assembly, binds pro-ACR. Does not bind the mature form of ACR. As to quaternary structure, binds pro-ACR. Does not bind mature form of ACR. Post-translationally, the N-terminus is blocked. Phosphorylated on Tyr residues in capacitated sperm. In terms of processing, synthesized as a 60-kDa precursor, the 32-kDa mature form is post-translationally produced by the removal of the N-terminal half of the precursor during sperm maturation in the testis and/or epididymis.

It localises to the cytoplasmic vesicle. The protein resides in the secretory vesicle. The protein localises to the acrosome. Functionally, acrosomal protein that maintains proacrosin (pro-ACR) as an enzymatically inactive zymogen in the acrosome. Involved also in the acrosome formation. In terms of biological role, maintains pro-ACR as an enzymatically inactive zymogen in the acrosome until acrosomal exocytosis. Partially also contributes to the assembly of acrosomal proteins to form an acrosomal granule. Rodent specific isoform that participates in the formation of the acrosomal granule into the center of the acrosomal vesicle during early spermiogenesis. In the fertilization process promotes ACR release from the acrosome during acrosomal exocytosis. This Rattus norvegicus (Rat) protein is Acrosin-binding protein.